The primary structure comprises 219 residues: UPF0502 protein Swoo_2055 (219 aa).

The interval 167–195 is disordered; that stretch reads QVKGESVPISEHSRSQREAPSKRQDEMDE. The segment covering 177 to 191 has biased composition (basic and acidic residues); that stretch reads EHSRSQREAPSKRQD.

This sequence belongs to the UPF0502 family.

This is UPF0502 protein Swoo_2055 from Shewanella woodyi (strain ATCC 51908 / MS32).